The following is a 421-amino-acid chain: Succinate--CoA ligase [ADP-forming] subunit beta, mitochondrial (421 aa).

A mitochondrion-targeting transit peptide spans M1–R26. One can recognise an ATP-grasp domain in the interval A35–A278. ATP is bound by residues K74, G81–G83, and E141. N233 and D247 together coordinate Mg(2+). Substrate contacts are provided by residues N298 and G355–M357.

This sequence belongs to the succinate/malate CoA ligase beta subunit family. Heterodimer of an alpha and a beta subunit. The cofactor is Mg(2+).

It localises to the mitochondrion. The enzyme catalyses succinate + ATP + CoA = succinyl-CoA + ADP + phosphate. It participates in carbohydrate metabolism; tricarboxylic acid cycle; succinate from succinyl-CoA (ligase route): step 1/1. Its function is as follows. Succinyl-CoA synthetase functions in the citric acid cycle (TCA), coupling the hydrolysis of succinyl-CoA to the synthesis of ATP and thus represents the only step of substrate-level phosphorylation in the TCA. The beta subunit provides nucleotide specificity of the enzyme and binds the substrate succinate, while the binding sites for coenzyme A and phosphate are found in the alpha subunit. The sequence is that of Succinate--CoA ligase [ADP-forming] subunit beta, mitochondrial from Arabidopsis thaliana (Mouse-ear cress).